The chain runs to 964 residues: MNSTLQNQTKTNLEKVGTDPLDTFPRRHIGPNLQQTAEMLKELGLSSVEELIDKAVPVGIRLKKSLDLPKASTEHKILQNLKGIASQNQVFRSYIGAGYHSCIIPGVIQRNILENPGWYTAYTPYQAEISQGRLEALLNFQTMIIDLTGLEISNASLLDEGTAAAEAMFLAYSVRKNETAKKFFVSELCHPQTIDVVVTRANPLGIEVQIGNHESIELNEDFFGVLLQYPATDGKVIDYTSFIQRSHNVGAISTVAADLLALTLLKSPGEMGADIAVGSSQRFGLPLGFGGPHAGYFATKDEFKRSMPGRLIGVSKDSQGNSGLRLSLQTREQHIRRDKATSNICTAQVLLAVISSMYAIYHGPEGLKNIATRIYKFTSIFANVLKNAGFSITNEFFFDTITIQAGAKVQEILNRAYSKKINFREYKDGKIGITLDETVNLEDLKDLLEIFEIKNTDIEKLFVDVSNVPDSFKRKTSYLTHPVFQSHHTETKMLRYIRKLESRDLSLTTSMIPLGSCTMKLNATTEMYPVTWPEFGAIHPFAPADQTKGYKIIFEQLEKWLCEITGFAGVSLQPNAGSQGEYAGLLAIRRYHESRNESYRNVCLIPISAHGTNPASAAMAGFQVVVVSCDPNGNVDLEDLKAKAEEHKKDLAALMITYPSTHGVFEESVKEICQIVHSCGGQVYMDGANMNAQVGLTSPGEIGADVCHLNLHKTFCIPHGGGGPGVGPIGVAKHLVPFLPGHVLVNNATGNEHGAVSAAPWGSASIVLISWVYIALMGSEGLTNATRNSILNANYIAKRLEKVYPVLYKGKNGFVAHECILDLRPFKKSAGIEVEDVAKRLIDYGFHAPTMSFPVPGTLMIEPTESESLEELDRFCEAMLLIYQEILDVQNGTLDKTDNPLKNSPHTAAMVTSDRWDHLYPRERAAYPASWLKDHKFWPYVGRVDNVYGDRNLVCSCLPIESYQ.

Over residues 1–11 the composition is skewed to polar residues; that stretch reads MNSTLQNQTKT. The tract at residues 1 to 21 is disordered; the sequence is MNSTLQNQTKTNLEKVGTDPL. Lys-713 is modified (N6-(pyridoxal phosphate)lysine).

The protein belongs to the GcvP family. In terms of assembly, the glycine cleavage system is composed of four proteins: P, T, L and H. Pyridoxal 5'-phosphate is required as a cofactor.

The catalysed reaction is N(6)-[(R)-lipoyl]-L-lysyl-[glycine-cleavage complex H protein] + glycine + H(+) = N(6)-[(R)-S(8)-aminomethyldihydrolipoyl]-L-lysyl-[glycine-cleavage complex H protein] + CO2. Functionally, the glycine cleavage system catalyzes the degradation of glycine. The P protein binds the alpha-amino group of glycine through its pyridoxal phosphate cofactor; CO(2) is released and the remaining methylamine moiety is then transferred to the lipoamide cofactor of the H protein. This Leptospira interrogans serogroup Icterohaemorrhagiae serovar Lai (strain 56601) protein is Glycine dehydrogenase (decarboxylating).